The sequence spans 129 residues: MEKYHSNSRFAPFRDAPFALRGALGSSGSSFSSIDSLRRSSTLEQARGYTSRPLGAVRPKMLPSGCRPLHTSHPLSAPVANRPLSPHLPLKKPQLSATFSISHRIFGAALGAAIISIPLATKFSLMFDV.

A mitochondrion-targeting transit peptide spans 1 to 58; sequence MEKYHSNSRFAPFRDAPFALRGALGSSGSSFSSIDSLRRSSTLEQARGYTSRPLGAVR. Low complexity predominate over residues 25-35; the sequence is GSSGSSFSSID. The tract at residues 25-80 is disordered; the sequence is GSSGSSFSSIDSLRRSSTLEQARGYTSRPLGAVRPKMLPSGCRPLHTSHPLSAPVA. His87 serves as a coordination point for heme. Residues 105–127 form a helical membrane-spanning segment; that stretch reads IFGAALGAAIISIPLATKFSLMF.

Component of complex II composed of eight subunits in plants: four classical SDH subunits SDH1, SDH2, SDH3 and SDH4 (a flavoprotein (FP), an iron-sulfur protein (IP), and a cytochrome b composed of a large and a small subunit.), as well as four subunits unknown in mitochondria from bacteria and heterotrophic eukaryotes. The cofactor is heme.

It localises to the mitochondrion inner membrane. It participates in carbohydrate metabolism; tricarboxylic acid cycle. In terms of biological role, membrane-anchoring subunit of succinate dehydrogenase (SDH). The polypeptide is Succinate dehydrogenase subunit 3-1, mitochondrial (Oryza sativa subsp. japonica (Rice)).